A 133-amino-acid polypeptide reads, in one-letter code: Small ribosomal subunit protein uS11 (133 aa).

The interval 1–23 is disordered; it reads MPPKTRGAVRKPRKKDKKNIALG. Basic residues predominate over residues 7–17; the sequence is GAVRKPRKKDK.

It belongs to the universal ribosomal protein uS11 family. Part of the 30S ribosomal subunit. Interacts with proteins S7 and S18. Binds to IF-3.

Functionally, located on the platform of the 30S subunit, it bridges several disparate RNA helices of the 16S rRNA. Forms part of the Shine-Dalgarno cleft in the 70S ribosome. This Arthrobacter sp. (strain FB24) protein is Small ribosomal subunit protein uS11.